A 676-amino-acid chain; its full sequence is tRNA 5-methylaminomethyl-2-thiouridine biosynthesis bifunctional protein MnmC (676 aa).

The tract at residues 1-241 (MFTVTPAKIY…KRECLCGIKN (241 aa)) is tRNA (mnm(5)s(2)U34)-methyltransferase. The FAD-dependent cmnm(5)s(2)U34 oxidoreductase stretch occupies residues 268–676 (IGGGIASLFT…RKLLKGTEIK (409 aa)).

It in the N-terminal section; belongs to the methyltransferase superfamily. tRNA (mnm(5)s(2)U34)-methyltransferase family. This sequence in the C-terminal section; belongs to the DAO family. The cofactor is FAD.

The protein localises to the cytoplasm. It carries out the reaction 5-aminomethyl-2-thiouridine(34) in tRNA + S-adenosyl-L-methionine = 5-methylaminomethyl-2-thiouridine(34) in tRNA + S-adenosyl-L-homocysteine + H(+). Its function is as follows. Catalyzes the last two steps in the biosynthesis of 5-methylaminomethyl-2-thiouridine (mnm(5)s(2)U) at the wobble position (U34) in tRNA. Catalyzes the FAD-dependent demodification of cmnm(5)s(2)U34 to nm(5)s(2)U34, followed by the transfer of a methyl group from S-adenosyl-L-methionine to nm(5)s(2)U34, to form mnm(5)s(2)U34. The protein is tRNA 5-methylaminomethyl-2-thiouridine biosynthesis bifunctional protein MnmC of Histophilus somni (strain 129Pt) (Haemophilus somnus).